A 360-amino-acid chain; its full sequence is DNA replication and repair protein RecF (360 aa).

ATP is bound at residue 33-40; the sequence is GENGSGKT.

It belongs to the RecF family.

Its subcellular location is the cytoplasm. Its function is as follows. The RecF protein is involved in DNA metabolism; it is required for DNA replication and normal SOS inducibility. RecF binds preferentially to single-stranded, linear DNA. It also seems to bind ATP. This Rickettsia peacockii (strain Rustic) protein is DNA replication and repair protein RecF.